The chain runs to 846 residues: Structure-specific endonuclease subunit SLX4 (846 aa).

Disordered regions lie at residues Met1–Ala20, Lys84–Met111, Gln123–Ala164, Arg283–Thr322, Asp480–Leu513, Pro624–Gln690, and Thr723–Ala751. Residues Lys141 to Ala153 are compositionally biased toward basic and acidic residues. Residues Leu293–Gly303 are compositionally biased toward polar residues. Basic residues predominate over residues Lys306–Lys318. Polar residues-rich tracts occupy residues Lys657–Thr680 and Ala725–Ala751.

It belongs to the SLX4 family. In terms of assembly, forms a heterodimer with SLX1. In terms of processing, phosphorylated in response to DNA damage.

The protein resides in the nucleus. Its function is as follows. Regulatory subunit of the SLX1-SLX4 structure-specific endonuclease that resolves DNA secondary structures generated during DNA repair and recombination. Has endonuclease activity towards branched DNA substrates, introducing single-strand cuts in duplex DNA close to junctions with ss-DNA. The sequence is that of Structure-specific endonuclease subunit SLX4 from Arthroderma otae (strain ATCC MYA-4605 / CBS 113480) (Microsporum canis).